A 350-amino-acid chain; its full sequence is DNA-directed RNA polymerase subunit alpha (350 aa).

An alpha N-terminal domain (alpha-NTD) region spans residues 1–226; it reads MLISQRPTLS…ELFGLARELN (226 aa). Residues 241–350 are alpha C-terminal domain (alpha-CTD); it reads ADQAAHFALP…NQDYAETEQL (110 aa). The segment at 328 to 350 is disordered; that stretch reads GTWNSDAGYDLEDNQDYAETEQL. The span at 336–350 shows a compositional bias: acidic residues; the sequence is YDLEDNQDYAETEQL.

It belongs to the RNA polymerase alpha chain family. As to quaternary structure, homodimer. The RNAP catalytic core consists of 2 alpha, 1 beta, 1 beta' and 1 omega subunit. When a sigma factor is associated with the core the holoenzyme is formed, which can initiate transcription.

It carries out the reaction RNA(n) + a ribonucleoside 5'-triphosphate = RNA(n+1) + diphosphate. Functionally, DNA-dependent RNA polymerase catalyzes the transcription of DNA into RNA using the four ribonucleoside triphosphates as substrates. The polypeptide is DNA-directed RNA polymerase subunit alpha (Mycolicibacterium vanbaalenii (strain DSM 7251 / JCM 13017 / BCRC 16820 / KCTC 9966 / NRRL B-24157 / PYR-1) (Mycobacterium vanbaalenii)).